The following is a 272-amino-acid chain: MDIKHHTSTSKPKNKNKLLKMLPKAMSFGHRVPPFSPGRDLHHNNHHNYTAANKMFFSGPMVPLVPNAARVRRNKSDAVWDEPTSPKVSCIGQIKLGKSKCPTGKKNKAPSSLIPKISKTSTSSLTKEDEKGRLSKIKSIFSFSPASGRNTSRKSHPTAVSAADEHPVTVVSTAAVPSLGQMKKFASSRDALGDFDWAVEMKHEEESPADHHRGYYSDDDTRGAYLRYDDDEDEDDIIIPFSAPLGLKPKKEVNLWKRRTMDPPKPLHLQTI.

Residues C101–E130 are disordered. Residues P110–L125 show a composition bias toward low complexity. At S142 the chain carries Phosphoserine.

This is an uncharacterized protein from Arabidopsis thaliana (Mouse-ear cress).